The chain runs to 347 residues: MKIFSTLLSQKPKGKLVIRPSTTIHSSDPFSKFIVTKNTEPLSLGDLRKSDSGNSAVCLNAENTILSTLTDLQKEEERNWDPVKFVAGKLRGVISPIQAYVTIGKKFSPNSLVYTSRFFQLHYFPEDHFMSCFRKSKPAITVKSNKKFYLNGKVFNKDKEYFNETRISKANEVELSKIQTAMTRLTNRHRNSIPSEFAYLRRDLKLKVKTTFIKEWCKLNGDKAIREYVNLNRSPNINPASMKGKPKKSFLDNLGRSTVGTAKDGYYLYIVSIFPDKDMLGEFNDEVNRSVQKVANLDWDGFLTPKKGTKGKNWVESFNDSINVQTINKILEINKFPFELRREQTEG.

Its subcellular location is the mitochondrion matrix. This Saccharomyces cerevisiae (strain ATCC 204508 / S288c) (Baker's yeast) protein is Protein PET130 (PET130).